Here is a 483-residue protein sequence, read N- to C-terminus: V-type proton ATPase subunit B 2 (483 aa).

This sequence belongs to the ATPase alpha/beta chains family. V-ATPase is a heteromultimeric enzyme composed of a peripheral catalytic V1 complex (main components: subunits A, B, C, D, E, and F) attached to an integral membrane V0 proton pore complex (main component: the proteolipid protein).

In terms of biological role, non-catalytic subunit of the peripheral V1 complex of vacuolar ATPase. V-ATPase is responsible for acidifying a variety of intracellular compartments in eukaryotic cells. This Hordeum vulgare (Barley) protein is V-type proton ATPase subunit B 2.